The following is a 295-amino-acid chain: Small ribosomal subunit protein mS23 (295 aa).

The disordered stretch occupies residues 249–295; the sequence is IGSVVEEEKSQSSLFEDLLSNDNLQSEPEVEQSGQQQQQEQPKQETN. Residues 273–289 are compositionally biased toward low complexity; sequence QSEPEVEQSGQQQQQEQ.

This sequence belongs to the mitochondrion-specific ribosomal protein mS23 family. In terms of assembly, component of the mitochondrial small ribosomal subunit (mt-SSU).

Its subcellular location is the mitochondrion. In terms of biological role, component of the mitochondrial ribosome (mitoribosome), a dedicated translation machinery responsible for the synthesis of mitochondrial genome-encoded proteins, including at least some of the essential transmembrane subunits of the mitochondrial respiratory chain. The mitoribosomes are attached to the mitochondrial inner membrane and translation products are cotranslationally integrated into the membrane. This chain is Small ribosomal subunit protein mS23 (RSM25), found in Candida albicans (strain SC5314 / ATCC MYA-2876) (Yeast).